The primary structure comprises 1055 residues: Kinesin-like protein KIN-7D, mitochondrial (1055 aa).

The segment covering 1–23 has biased composition (low complexity); it reads MASSSSRTRSSRPPSPASSTSSS. The tract at residues 1–36 is disordered; that stretch reads MASSSSRTRSSRPPSPASSTSSSHLSNRLIPRSNST. The transit peptide at 1-96 directs the protein to the mitochondrion; sequence MASSSSRTRS…PMDDTISSER (96 aa). The Kinesin motor domain maps to 98–415; it reads SISVTVRFRP…LKFASRAKSI (318 aa). Position 178–185 (178–185) interacts with ATP; the sequence is GVTSSGKT. 3 coiled-coil regions span residues 419 to 503, 618 to 653, and 694 to 823; these read ASRN…ILVS, PENS…GEAS, and LQEK…LAQT. Residues 826 to 856 form a disordered region; that stretch reads PMNGVNRKYNDGARSGRKGRISSSRSSGDEF. Residues 880–911 are a coiled coil; the sequence is LESALAEKEFIEDEYRKKAEEAKRREEALEND. The disordered stretch occupies residues 926 to 963; sequence NGALPEPNGTDPGRELEKSQSHAVLKERQVSSAPRQPE. A compositionally biased stretch (basic and acidic residues) spans 937–954; that stretch reads PGRELEKSQSHAVLKERQ. An RING-type zinc finger spans residues 1008–1043; the sequence is CKVCFESPTAAILLPCRHFCLCKSCSLACSECPICR.

Belongs to the TRAFAC class myosin-kinesin ATPase superfamily. Kinesin family. KIN-7 subfamily.

It localises to the mitochondrion. The sequence is that of Kinesin-like protein KIN-7D, mitochondrial from Arabidopsis thaliana (Mouse-ear cress).